The following is a 1108-amino-acid chain: Retinal guanylyl cyclase 2 (1108 aa).

The first 50 residues, 1-50 (MFLGPWPFSRLLSWFAISSRLSGQHGLTSSKFLRYLCLLALLPLIWWGQA), serve as a signal peptide directing secretion. The Extracellular portion of the chain corresponds to 51–465 (LPYKIGVIGP…QGKICQGGID (415 aa)). Cysteines 104 and 132 form a disulfide. The chain crosses the membrane as a helical span at residues 466–490 (PALAMMVCFALLLALLSINGFAYFI). At 491 to 1108 (RRRINKIQLI…AERQLVRNKP (618 aa)) the chain is on the cytoplasmic side. The region spanning 532 to 812 (FQIISEVQSG…DEIFNQFKTF (281 aa)) is the Protein kinase domain. The Guanylate cyclase domain occupies 884 to 1014 (TLYFSDIVGF…DTVNTASRME (131 aa)).

It belongs to the adenylyl cyclase class-4/guanylyl cyclase family. As to quaternary structure, homodimer. Interacts with RD3; promotes the exit of GUCY2F from the endoplasmic reticulum and its trafficking to the photoreceptor outer segments. In terms of processing, there are 9 conserved cysteine residues in sensory guanylate cyclases, 6 in the extracellular domain, which may be involved in intra- or interchain disulfide bonds. As to expression, expressed only in the eye.

It is found in the membrane. The protein resides in the photoreceptor outer segment membrane. It carries out the reaction GTP = 3',5'-cyclic GMP + diphosphate. Activated by GUCA1B when free calcium ions concentration is low, and inhibited by GUCA1B when free calcium ions concentration is high. Inhibited by RD3. Responsible for the synthesis of cyclic GMP (cGMP) in rods and cones of photoreceptors. Plays an essential role in phototransduction, by mediating cGMP replenishment. May also participate in the trafficking of membrane-asociated proteins to the photoreceptor outer segment membrane. This chain is Retinal guanylyl cyclase 2 (Gucy2f), found in Rattus norvegicus (Rat).